A 303-amino-acid polypeptide reads, in one-letter code: ADP-ribosyl cyclase/cyclic ADP-ribose hydrolase 1 (303 aa).

The Cytoplasmic segment spans residues 1–21 (MANYEFSQVSEDRPGCRLTRK). A helical; Signal-anchor for type II membrane protein transmembrane segment spans residues 22–44 (AQIGLGVGLLLLVALVVVVVIVL). Residues 45 to 303 (WPRSPLVWKG…PEHPSCRLNV (259 aa)) are Extracellular-facing. 3 disulfides stabilise this stretch: cysteine 69/cysteine 85, cysteine 102/cysteine 183, and cysteine 163/cysteine 176. Asparagine 103 carries N-linked (GlcNAc...) asparagine glycosylation. Cysteine 122 is an active-site residue. Residue asparagine 123 is glycosylated (N-linked (GlcNAc...) asparagine). Cysteine 204 is a catalytic residue. Asparagine 212 and asparagine 222 each carry an N-linked (GlcNAc...) asparagine glycan. Intrachain disulfides connect cysteine 257–cysteine 278 and cysteine 290–cysteine 299.

It belongs to the ADP-ribosyl cyclase family. Homodimer. In terms of tissue distribution, spleen, liver, heart, thymus, thyroid gland, ileum, colon, cerebellum, salivary gland, adrenal gland, jejunum, islets of Langerhans and osteoclasts.

Its subcellular location is the cell membrane. It carries out the reaction NAD(+) = cyclic ADP-beta-D-ribose + nicotinamide + H(+). The enzyme catalyses nicotinate + NADP(+) = nicotinate-adenine dinucleotide phosphate + nicotinamide. It catalyses the reaction NAD(+) + H2O = ADP-D-ribose + nicotinamide + H(+). Both NAADP and cADPR synthesis are inhibited by nicotinic acid. Its function is as follows. Synthesizes the second messengers cyclic ADP-ribose and nicotinate-adenine dinucleotide phosphate, the former a second messenger for glucose-induced insulin secretion, the latter a Ca(2+) mobilizer. Also has cADPR hydrolase activity. Functionally, regulates osteoclastic bone resorption, probably via production of cyclic ADP-ribose and triggering of a cytosolic calcium ion signal through ryanodine receptor activation. This is ADP-ribosyl cyclase/cyclic ADP-ribose hydrolase 1 (Cd38) from Rattus norvegicus (Rat).